A 198-amino-acid chain; its full sequence is uncharacterized protein (198 aa).

The signal sequence occupies residues 1–28 (MHPTQRKLMKRIILFLSLLFCIACPAIA).

This sequence belongs to the fimbrial protein family.

It is found in the fimbrium. In terms of biological role, part of the yadCKLM-htrE-yadVN fimbrial operon. Could contribute to adhesion to various surfaces in specific environmental niches. This is an uncharacterized protein from Escherichia coli (strain K12).